The sequence spans 345 residues: 4-hydroxyproline 2-epimerase 1 (345 aa).

Gln85 is a substrate binding site. Ser93 serves as the catalytic Proton acceptor. Substrate is bound by residues 94–95 (GS) and Asp251. Cys255 functions as the Proton donor in the catalytic mechanism. Residue 256 to 257 (GT) participates in substrate binding.

It belongs to the proline racemase family.

The catalysed reaction is trans-4-hydroxy-L-proline = cis-4-hydroxy-D-proline. Catalyzes the epimerization of trans-4-hydroxy-L-proline (t4LHyp) to cis-4-hydroxy-D-proline (c4DHyp). May be involved in a degradation pathway of t4LHyp. Can also catalyze the epimerization of trans-3-hydroxy-L-proline (t3LHyp) to cis-3-hydroxy-D-proline (c3DHyp) in vitro. Displays no proline racemase activity. The polypeptide is 4-hydroxyproline 2-epimerase 1 (Rhizobium rhizogenes (strain K84 / ATCC BAA-868) (Agrobacterium radiobacter)).